Consider the following 56-residue polypeptide: uncharacterized protein (56 aa).

Helical transmembrane passes span Val6–Gly26 and Val29–Val49.

The protein resides in the cell membrane. This is an uncharacterized protein from Bacillus subtilis (strain 168).